The chain runs to 359 residues: Uracil-DNA glycosylase (359 aa).

Residues 1–21 (MWCMRRLPTNSVMTVARKRKQ) constitute a mitochondrion transit peptide. Asp-162 functions as the Proton acceptor in the catalytic mechanism.

The protein belongs to the uracil-DNA glycosylase (UDG) superfamily. UNG family.

The protein localises to the mitochondrion. It is found in the nucleus. The enzyme catalyses Hydrolyzes single-stranded DNA or mismatched double-stranded DNA and polynucleotides, releasing free uracil.. Excises uracil residues from the DNA which can arise as a result of misincorporation of dUMP residues by DNA polymerase or due to deamination of cytosine. Not involved in strand-directed mismatch repair. This is Uracil-DNA glycosylase from Saccharomyces cerevisiae (strain ATCC 204508 / S288c) (Baker's yeast).